We begin with the raw amino-acid sequence, 244 residues long: MVEGMLKTNFRLLFLLIFLLIPTPVLAMHIMEGFLPVKWVIFWDLVTLPFIMVGFIRLQREATQGPGAKLMLAFAGAFIFVLSALKMPSVTGSCSHPTGTGLAAILFGPFITTVLGFIVLIFQALLLAHGGLTTLGANTFSMAVAGPLVAYGVYKGLQKAGINSNFSIFLAAMLGDLVTYIVTSVQLALAFPGSSLFLSALKFMGIFALTQIPLAISEGILTVLTYNFLSRYEDAKIWVEKGEH.

The N-terminal stretch at 1-27 is a signal peptide; it reads MVEGMLKTNFRLLFLLIFLLIPTPVLA. The next 6 membrane-spanning stretches (helical) occupy residues 36–56, 65–85, 102–122, 134–154, 168–188, and 196–216; these read PVKWVIFWDLVTLPFIMVGFI, GPGAKLMLAFAGAFIFVLSAL, LAAILFGPFITTVLGFIVLIF, TLGANTFSMAVAGPLVAYGVY, IFLAAMLGDLVTYIVTSVQLA, and LFLSALKFMGIFALTQIPLAI.

It belongs to the CbiM family. In terms of assembly, forms an energy-coupling factor (ECF) transporter complex composed of an ATP-binding protein (A component, CbiO), a transmembrane protein (T component, CbiQ) and 2 possible substrate-capture proteins (S components, CbiM and CbiN) of unknown stoichimetry.

The protein localises to the cell membrane. It functions in the pathway cofactor biosynthesis; adenosylcobalamin biosynthesis. Part of the energy-coupling factor (ECF) transporter complex CbiMNOQ involved in cobalt import. This chain is Cobalt transport protein CbiM, found in Carboxydothermus hydrogenoformans (strain ATCC BAA-161 / DSM 6008 / Z-2901).